A 284-amino-acid polypeptide reads, in one-letter code: L-ribulose-5-phosphate 3-epimerase UlaE (284 aa).

Belongs to the L-ribulose-5-phosphate 3-epimerase family.

It carries out the reaction L-ribulose 5-phosphate = L-xylulose 5-phosphate. The protein operates within cofactor degradation; L-ascorbate degradation; D-xylulose 5-phosphate from L-ascorbate: step 3/4. Catalyzes the isomerization of L-xylulose-5-phosphate to L-ribulose-5-phosphate. Is involved in the anaerobic L-ascorbate utilization. The protein is L-ribulose-5-phosphate 3-epimerase UlaE of Shigella flexneri serotype 5b (strain 8401).